We begin with the raw amino-acid sequence, 600 residues long: Glutamine--fructose-6-phosphate aminotransferase [isomerizing] (600 aa).

C2 acts as the Nucleophile; for GATase activity in catalysis. Positions 2–217 (CGIVGFIGEQ…DKEIVIVTKE (216 aa)) constitute a Glutamine amidotransferase type-2 domain. SIS domains follow at residues 283–422 (IRNA…AKGE) and 452–590 (LAKQ…VDKP). The active-site For Fru-6P isomerization activity is K595.

Homodimer.

The protein localises to the cytoplasm. It catalyses the reaction D-fructose 6-phosphate + L-glutamine = D-glucosamine 6-phosphate + L-glutamate. In terms of biological role, catalyzes the first step in hexosamine metabolism, converting fructose-6P into glucosamine-6P using glutamine as a nitrogen source. The chain is Glutamine--fructose-6-phosphate aminotransferase [isomerizing] from Bacillus cereus (strain ATCC 10987 / NRS 248).